The sequence spans 244 residues: MPLGLIGEKVGMTRVLLKDGTAIPVTVIKFPVNYVVQVKSVNTKDGYNALQVGAYEAKEKHLTKPLIGHFKKHGVPLLRRLWEFRVDNPEEFKSGQELRVQDVFKPGDLVDVWGISKGRGFAGVMKRWDFAGFPRSHGHRYHRAVGAIGQRTDPGRVWKGKKMPGHYGAKPVRVQGLFVVASLPEENAILVKGSALPGHNKGIVVLLPAVERIAYRKSQKLKQKRLQFIVENLVKEESTEVAES.

Belongs to the universal ribosomal protein uL3 family. In terms of assembly, part of the 50S ribosomal subunit. Forms a cluster with proteins L14 and L19.

Its function is as follows. One of the primary rRNA binding proteins, it binds directly near the 3'-end of the 23S rRNA, where it nucleates assembly of the 50S subunit. This chain is Large ribosomal subunit protein uL3, found in Aquifex pyrophilus.